Consider the following 334-residue polypeptide: Nucleoid-associated protein YPTS_1390 (334 aa).

It belongs to the YejK family.

The protein localises to the cytoplasm. It localises to the nucleoid. The polypeptide is Nucleoid-associated protein YPTS_1390 (Yersinia pseudotuberculosis serotype IB (strain PB1/+)).